Here is a 440-residue protein sequence, read N- to C-terminus: MKKLLLAASIIYFASVSLAEEKTTPFISNSDTKIKLEGFYLFESGYIKQDHLILFDKNVTDNRKKLGFDTEVAFAATITKTIDDVIAGAKIVLQPTTKAKTTASYNGSHIFIETSYGKVELGSPVDASAQLRVTGNKVTAGTGGWYRYALLDGQYMRYNALKPDFDTSVNFYLESYSNSFDQVNEKTEKARRLNFFTPKMKGFQAGISYTPDTANTGGNKNINNLTLQSSGRNGISASRTGIKTLSIANGEIMTINQNIRDAFSAGLTYEHAISEDADLKLSMTGEYGKPARRLIHAKVDGTTKAIEVLNTYKLSNLKAYNLGAVFTYGNFSCGASYGNLGKSLTAKEYYKVGRNTYYYNGAVAYGQGPIKTSLAYLKTSRYKNTVNAVSLATEYKIMPGLLPYAEISHFQAKGKPVYYPEAPSKTTRGTVGLIGTKLKF.

The first 19 residues, 1–19, serve as a signal peptide directing secretion; the sequence is MKKLLLAASIIYFASVSLA.

This is an uncharacterized protein from Rickettsia typhi (strain ATCC VR-144 / Wilmington).